A 264-amino-acid polypeptide reads, in one-letter code: 3-methyl-2-oxobutanoate hydroxymethyltransferase (264 aa).

Residues Asp45 and Asp84 each coordinate Mg(2+). 3-methyl-2-oxobutanoate is bound by residues 45 to 46 (DS), Asp84, and Lys112. Glu114 provides a ligand contact to Mg(2+). Glu181 acts as the Proton acceptor in catalysis.

This sequence belongs to the PanB family. Homodecamer; pentamer of dimers. The cofactor is Mg(2+).

It localises to the cytoplasm. The enzyme catalyses 3-methyl-2-oxobutanoate + (6R)-5,10-methylene-5,6,7,8-tetrahydrofolate + H2O = 2-dehydropantoate + (6S)-5,6,7,8-tetrahydrofolate. It functions in the pathway cofactor biosynthesis; (R)-pantothenate biosynthesis; (R)-pantoate from 3-methyl-2-oxobutanoate: step 1/2. Its function is as follows. Catalyzes the reversible reaction in which hydroxymethyl group from 5,10-methylenetetrahydrofolate is transferred onto alpha-ketoisovalerate to form ketopantoate. This Colwellia psychrerythraea (strain 34H / ATCC BAA-681) (Vibrio psychroerythus) protein is 3-methyl-2-oxobutanoate hydroxymethyltransferase.